Here is a 435-residue protein sequence, read N- to C-terminus: Nuclear hormone receptor family member nhr-136 (435 aa).

Residues 50 to 129 constitute a DNA-binding region (nuclear receptor); it reads PSNCKVCRHS…AGMNPSAIQA (80 aa). 2 NR C4-type zinc fingers span residues 53 to 73 and 89 to 112; these read CKVC…CNGC and CLKM…CRAC. The region spanning 194–430 is the NR LBD domain; sequence RDIRKLDELI…RYTRISNLYE (237 aa).

The protein belongs to the nuclear hormone receptor family.

It localises to the nucleus. Orphan nuclear receptor. The polypeptide is Nuclear hormone receptor family member nhr-136 (nhr-136) (Caenorhabditis elegans).